Consider the following 236-residue polypeptide: Leucyl/phenylalanyl-tRNA--protein transferase (236 aa).

This sequence belongs to the L/F-transferase family.

It is found in the cytoplasm. It carries out the reaction N-terminal L-lysyl-[protein] + L-leucyl-tRNA(Leu) = N-terminal L-leucyl-L-lysyl-[protein] + tRNA(Leu) + H(+). It catalyses the reaction N-terminal L-arginyl-[protein] + L-leucyl-tRNA(Leu) = N-terminal L-leucyl-L-arginyl-[protein] + tRNA(Leu) + H(+). The catalysed reaction is L-phenylalanyl-tRNA(Phe) + an N-terminal L-alpha-aminoacyl-[protein] = an N-terminal L-phenylalanyl-L-alpha-aminoacyl-[protein] + tRNA(Phe). In terms of biological role, functions in the N-end rule pathway of protein degradation where it conjugates Leu, Phe and, less efficiently, Met from aminoacyl-tRNAs to the N-termini of proteins containing an N-terminal arginine or lysine. The chain is Leucyl/phenylalanyl-tRNA--protein transferase from Shewanella sp. (strain ANA-3).